Reading from the N-terminus, the 594-residue chain is Golgi-associated RAB2 interactor protein 4 (594 aa).

Positions A390–R525 are disordered. Over residues S396 to G406 the composition is skewed to polar residues. Composition is skewed to basic and acidic residues over residues H408–L433, T442–A455, and A468–G477. Residues R510–K521 are compositionally biased toward low complexity.

The protein belongs to the GARIN family. As to quaternary structure, interacts (via N-terminus) with RAB2B (in GTP-bound form).

It is found in the golgi apparatus. In terms of biological role, RAB2B effector protein required for the compacted Golgi morphology, probably through interaction with small GTPase RAB2B. This chain is Golgi-associated RAB2 interactor protein 4 (GARIN4), found in Macaca fascicularis (Crab-eating macaque).